Reading from the N-terminus, the 419-residue chain is RNA polymerase sigma factor sigD, chloroplastic (419 aa).

Residues 1–52 (MATTIPTTATATMCPSPPVPTISPLLRTTHQCQPSPSLSSPFSIKLSTALVC) constitute a chloroplast transit peptide. A Polymerase core binding motif is present at residues 207 to 220 (DLIQEGSIGLLRGA). The H-T-H motif DNA-binding region spans 377 to 396 (FEEIGKSLKLSRERVRQING).

The protein belongs to the sigma-70 factor family. As to expression, mostly expressed in leaves, and to a lesser extent in roots. Present in seedlings.

The protein resides in the plastid. It localises to the chloroplast. Sigma factors are initiation factors that promote the attachment of plastid-encoded RNA polymerase (PEP) to specific initiation sites and are then released. Regulates transcription of the ndhF gene which codes for a subunit of the plastid NDH [NAD(P)H dehydrogenase] complex. The polypeptide is RNA polymerase sigma factor sigD, chloroplastic (SIGD) (Arabidopsis thaliana (Mouse-ear cress)).